A 428-amino-acid polypeptide reads, in one-letter code: UPF0229 protein YeaH (428 aa).

Basic and acidic residues predominate over residues 78–90 (GNDHFIQNDRIER). The interval 78-111 (GNDHFIQNDRIERPQGGGGGGSGSGQGQASQDGE) is disordered. The span at 92 to 103 (QGGGGGGSGSGQ) shows a compositional bias: gly residues.

It belongs to the UPF0229 family.

The polypeptide is UPF0229 protein YeaH (Salmonella choleraesuis (strain SC-B67)).